Consider the following 230-residue polypeptide: MTDDDRIKLEPSWKAALRGEFDQPYMHQLREFLRGEYAAGKEIYPPGPLIFNALNSTPLGQVKVVILGQDPYHGPGQAHGLCFSVQPGVATPPSLVNIYKELQRDLNIPIPSHGYLQSWAEQGVLLLNTTMTVERANAASHAKKGWELFTDRIIQVVSEQCPNVVFLLWGAHAQSKQKLIDGTKHLVLKSVHPSPLSAYRGFIGCGHFSRTNSFLEQRGLGPIDWALPPL.

Asp70 acts as the Proton acceptor in catalysis.

This sequence belongs to the uracil-DNA glycosylase (UDG) superfamily. UNG family.

Its subcellular location is the cytoplasm. It catalyses the reaction Hydrolyzes single-stranded DNA or mismatched double-stranded DNA and polynucleotides, releasing free uracil.. Excises uracil residues from the DNA which can arise as a result of misincorporation of dUMP residues by DNA polymerase or due to deamination of cytosine. The sequence is that of Uracil-DNA glycosylase from Pseudomonas putida (strain ATCC 700007 / DSM 6899 / JCM 31910 / BCRC 17059 / LMG 24140 / F1).